The chain runs to 565 residues: Anaphase-promoting complex subunit 7 (565 aa).

TPR repeat units follow at residues 101–134 (EIEV…RQRT), 169–202 (LDAI…LDWL), 203–236 (SVWI…LRDN), 237–270 (VDLL…DPYL), 339–372 (VQAL…APCR), 373–406 (LDCY…LGAN), 407–439 (AQTL…AQRP), 442–474 (VKAV…NQSD), 475–508 (CVLH…DPND), and 509–531 (QKSL…TQEE). The residue at position 229 (Lys-229) is an N6-acetyllysine. Residues 513–523 (EGMQKMEKEES) are compositionally biased toward basic and acidic residues. Residues 513-565 (EGMQKMEKEESPTDATQEEDVDDMEGSGEEGDLEGSDSEAAQWADQEQWFGMQ) form a disordered region. A compositionally biased stretch (acidic residues) spans 528–549 (TQEEDVDDMEGSGEEGDLEGSD).

Belongs to the APC7 family. In terms of assembly, V-shaped homodimer. The mammalian APC/C is composed at least of 14 distinct subunits ANAPC1, ANAPC2, CDC27/APC3, ANAPC4, ANAPC5, CDC16/APC6, ANAPC7, CDC23/APC8, ANAPC10, ANAPC11, CDC26/APC12, ANAPC13, ANAPC15 and ANAPC16 that assemble into a complex of at least 19 chains with a combined molecular mass of around 1.2 MDa; APC/C interacts with FZR1 and FBXO5.

The protein resides in the cytoplasm. It is found in the cytoskeleton. Its subcellular location is the nucleus. It localises to the spindle. It functions in the pathway protein modification; protein ubiquitination. Component of the anaphase promoting complex/cyclosome (APC/C), a cell cycle-regulated E3 ubiquitin ligase that controls progression through mitosis and the G1 phase of the cell cycle. The APC/C complex acts by mediating ubiquitination and subsequent degradation of target proteins: it mainly mediates the formation of 'Lys-11'-linked polyubiquitin chains and, to a lower extent, the formation of 'Lys-48'- and 'Lys-63'-linked polyubiquitin chains. The APC/C complex catalyzes assembly of branched 'Lys-11'-/'Lys-48'-linked branched ubiquitin chains on target proteins. APC7 is not required for the assembly of the APC/C complex, but has an enzyme-substrate adapter activity mediating the processive ubiquitination of specific substrates. Involved in brain development through the specific ubiquitination and clearance of MKI67 from constitutive heterochromatin after neuronal progenitors exit mitosis. The protein is Anaphase-promoting complex subunit 7 (Anapc7) of Mus musculus (Mouse).